The primary structure comprises 63 residues: Beta-defensin 38 (63 aa).

The signal sequence occupies residues 1 to 21; that stretch reads MKISCFLLLVLSLYLFQVNQA. 3 disulfides stabilise this stretch: Cys29–Cys58, Cys36–Cys51, and Cys41–Cys59.

The protein belongs to the beta-defensin family.

The protein localises to the secreted. In terms of biological role, has antibacterial activity. The polypeptide is Beta-defensin 38 (Defb38) (Rattus norvegicus (Rat)).